The sequence spans 484 residues: F-box/LRR-repeat protein At3g59210 (484 aa).

The region spanning 6–54 (KDIINCLPDNLLCQILSNLSTKEAALTSLLSKRWRYLFALVPNLDFDVL) is the F-box domain. 5 LRR repeats span residues 144–170 (KIGP…NLDS), 172–197 (VFEE…SLLN), 205–234 (SCSV…SFDT), 303–334 (TLYL…TIES), and 335–360 (HPEL…VFQG).

This is F-box/LRR-repeat protein At3g59210 from Arabidopsis thaliana (Mouse-ear cress).